A 446-amino-acid chain; its full sequence is UDP-N-acetylmuramoylalanine--D-glutamate ligase (446 aa).

Residue 116–122 coordinates ATP; it reads GSNGKTT.

It belongs to the MurCDEF family.

The protein resides in the cytoplasm. The enzyme catalyses UDP-N-acetyl-alpha-D-muramoyl-L-alanine + D-glutamate + ATP = UDP-N-acetyl-alpha-D-muramoyl-L-alanyl-D-glutamate + ADP + phosphate + H(+). The protein operates within cell wall biogenesis; peptidoglycan biosynthesis. Functionally, cell wall formation. Catalyzes the addition of glutamate to the nucleotide precursor UDP-N-acetylmuramoyl-L-alanine (UMA). The protein is UDP-N-acetylmuramoylalanine--D-glutamate ligase of Marinobacter nauticus (strain ATCC 700491 / DSM 11845 / VT8) (Marinobacter aquaeolei).